The chain runs to 311 residues: Ribosomal RNA small subunit methyltransferase H 1 (311 aa).

Residues Ala-33–His-35, Asp-53, Phe-80, Asp-101, and Gln-108 contribute to the S-adenosyl-L-methionine site.

Belongs to the methyltransferase superfamily. RsmH family.

The protein resides in the cytoplasm. The enzyme catalyses cytidine(1402) in 16S rRNA + S-adenosyl-L-methionine = N(4)-methylcytidine(1402) in 16S rRNA + S-adenosyl-L-homocysteine + H(+). Functionally, specifically methylates the N4 position of cytidine in position 1402 (C1402) of 16S rRNA. The chain is Ribosomal RNA small subunit methyltransferase H 1 from Alkaliphilus metalliredigens (strain QYMF).